We begin with the raw amino-acid sequence, 1438 residues long: DNA polymerase III PolC-type (1438 aa).

Residues tyrosine 422–phenylalanine 578 form the Exonuclease domain.

Belongs to the DNA polymerase type-C family. PolC subfamily.

Its subcellular location is the cytoplasm. The enzyme catalyses DNA(n) + a 2'-deoxyribonucleoside 5'-triphosphate = DNA(n+1) + diphosphate. Required for replicative DNA synthesis. This DNA polymerase also exhibits 3' to 5' exonuclease activity. The chain is DNA polymerase III PolC-type from Staphylococcus epidermidis (strain ATCC 35984 / DSM 28319 / BCRC 17069 / CCUG 31568 / BM 3577 / RP62A).